Here is a 555-residue protein sequence, read N- to C-terminus: Formate--tetrahydrofolate ligase (555 aa).

65–72 contributes to the ATP binding site; it reads TPAGEGKT.

It belongs to the formate--tetrahydrofolate ligase family.

The enzyme catalyses (6S)-5,6,7,8-tetrahydrofolate + formate + ATP = (6R)-10-formyltetrahydrofolate + ADP + phosphate. It participates in one-carbon metabolism; tetrahydrofolate interconversion. This chain is Formate--tetrahydrofolate ligase, found in Syntrophomonas wolfei subsp. wolfei (strain DSM 2245B / Goettingen).